Reading from the N-terminus, the 141-residue chain is Nucleoside triphosphatase NudI (141 aa).

In terms of domain architecture, Nudix hydrolase spans Met-1–Leu-141. Positions Gly-38 to Gly-59 match the Nudix box motif.

Belongs to the Nudix hydrolase family. NudI subfamily. In terms of assembly, monomer. Mg(2+) is required as a cofactor.

It carries out the reaction a ribonucleoside 5'-triphosphate + H2O = a ribonucleoside 5'-phosphate + diphosphate + H(+). It catalyses the reaction a 2'-deoxyribonucleoside 5'-triphosphate + H2O = a 2'-deoxyribonucleoside 5'-phosphate + diphosphate + H(+). The enzyme catalyses dUTP + H2O = dUMP + diphosphate + H(+). The catalysed reaction is dTTP + H2O = dTMP + diphosphate + H(+). It carries out the reaction dCTP + H2O = dCMP + diphosphate + H(+). Catalyzes the hydrolysis of nucleoside triphosphates, with a preference for pyrimidine deoxynucleoside triphosphates (dUTP, dTTP and dCTP). This Escherichia coli (strain ATCC 8739 / DSM 1576 / NBRC 3972 / NCIMB 8545 / WDCM 00012 / Crooks) protein is Nucleoside triphosphatase NudI.